The primary structure comprises 217 residues: Large ribosomal subunit protein eL6 (217 aa).

Belongs to the eukaryotic ribosomal protein eL6 family. As to quaternary structure, component of the large ribosomal subunit. May bind IPO9 with low affinity.

Its subcellular location is the cytoplasm. The protein resides in the cytosol. It is found in the rough endoplasmic reticulum. Component of the large ribosomal subunit. This Caenorhabditis elegans protein is Large ribosomal subunit protein eL6 (rpl-6).